The primary structure comprises 73 residues: UPF0270 protein SG2298 (73 aa).

The protein belongs to the UPF0270 family.

The sequence is that of UPF0270 protein SG2298 from Sodalis glossinidius (strain morsitans).